Consider the following 246-residue polypeptide: MFQLPILNFSPQQVAGVCETLEESGDIERLGRFLWSLPVAPAACEALNKNESVLRARAIVAFHTGNYRELYHILENHKFTKESHGKLQALWLEAHYQEAEKLRGRPLGPVDKYRVRKKFPLPRTIWDGEQKTHCFKERTRHLLREWYLQDPYPNPSKKRELAQATGLTPTQVGNWFKNRRQRDRAAAAKNRLQQQVLAQGSGRSLQAEEESGGEAGGAASSPAVSLSSKAATSAISITSSDSECDI.

The homeobox DNA-binding region spans 126–186 (WDGEQKTHCF…KNRRQRDRAA (61 aa)). The segment covering 195–204 (QVLAQGSGRS) has biased composition (polar residues). Residues 195 to 246 (QVLAQGSGRSLQAEEESGGEAGGAASSPAVSLSSKAATSAISITSSDSECDI) form a disordered region. Low complexity predominate over residues 217–246 (GAASSPAVSLSSKAATSAISITSSDSECDI).

Belongs to the SIX/Sine oculis homeobox family. In the developing embryo, expressed in the anterior head-fold, the anterior neural plate and optic vesicle. At later stages expression is maintained in the eye, while brain expression becomes limited. Not expressed in the lens placode.

It localises to the nucleus. In terms of biological role, may be involved in eye development. The polypeptide is Homeobox protein SIX6 (SIX6) (Gallus gallus (Chicken)).